A 232-amino-acid polypeptide reads, in one-letter code: Glutathione-specific gamma-glutamylcyclotransferase (232 aa).

10-15 lines the substrate pocket; that stretch reads VLGYGS. Glu-115 (proton acceptor) is an active-site residue.

It belongs to the gamma-glutamylcyclotransferase family. ChaC subfamily.

The protein localises to the cytoplasm. The protein resides in the nucleus. It carries out the reaction glutathione = L-cysteinylglycine + 5-oxo-L-proline. Catalyzes the cleavage of glutathione into 5-oxo-L-proline and a Cys-Gly dipeptide. Acts specifically on glutathione, but not on other gamma-glutamyl peptides. Allows utilization of gluthathione through subsequent cleavage of the Cys-Gly dipeptide by Cys-Gly metallodipeptidase DUG1. This Saccharomyces cerevisiae (strain ATCC 204508 / S288c) (Baker's yeast) protein is Glutathione-specific gamma-glutamylcyclotransferase.